The following is a 147-amino-acid chain: Protein LOL4 (147 aa).

Putative zinc finger regions lie at residues 4–34 (QLIC…LTAV), 44–74 (ELIC…LNST), and 82–112 (HLTC…VNHV).

It localises to the nucleus. Its function is as follows. Putative zinc finger that may be involved in programmed cell death and defense response. The chain is Protein LOL4 (LOL4) from Oryza sativa subsp. japonica (Rice).